Here is a 57-residue protein sequence, read N- to C-terminus: Large ribosomal subunit protein bL32A (57 aa).

Belongs to the bacterial ribosomal protein bL32 family.

The protein is Large ribosomal subunit protein bL32A (rpmF1) of Streptomyces coelicolor (strain ATCC BAA-471 / A3(2) / M145).